Here is a 680-residue protein sequence, read N- to C-terminus: Tumor protein 63 (680 aa).

The interval 1–107 is transcription activation; sequence MNFETSRCAT…MQDSDLSDPM (107 aa). Over residues 123–157 the composition is skewed to polar residues; that stretch reads QIQNGSSSTSPYNTDHAQNSVTAPSPYAQPSSTFD. The disordered stretch occupies residues 123 to 171; sequence QIQNGSSSTSPYNTDHAQNSVTAPSPYAQPSSTFDALSPSPAIPSNTDY. The DNA-binding element occupies 170–362; it reads DYPGPHSFDV…KADEDSIRKQ (193 aa). 4 residues coordinate Zn(2+): Cys244, His247, Cys308, and Cys312. Positions 351-360 are enriched in basic and acidic residues; it reads DRKADEDSIR. Disordered regions lie at residues 351–393 and 436–472; these read DRKA…IKKR and RQQQQQQHQHLLQKQTSMQSQSSYGNSSPPLNKMNSM. Residues 352 to 388 are interaction with HIPK2; sequence RKADEDSIRKQQVSDSAKNGDGTKRPFRQNTHGIQMT. The segment covering 379-389 has biased composition (polar residues); the sequence is RQNTHGIQMTS. The interval 394 to 443 is oligomerization; the sequence is RSPDDELLYLPVRGRETYEMLLKIKESLELMQYLPQHTIETYRQQQQQQH. Over residues 437–463 the composition is skewed to low complexity; it reads QQQQQQHQHLLQKQTSMQSQSSYGNSS. The 67-residue stretch at 541–607 folds into the SAM domain; it reads PPYPTDCSIV…WKGILDHRQL (67 aa). The segment at 610–680 is transactivation inhibition; it reads FSSPPHLLRT…KQQRIKEEGE (71 aa). Lys676 is covalently cross-linked (Glycyl lysine isopeptide (Lys-Gly) (interchain with G-Cter in SUMO)).

This sequence belongs to the p53 family. Binds DNA as a homotetramer. Isoform composition of the tetramer may determine transactivation activity. Interacts with HIPK2. Interacts with SSRP1, leading to stimulate coactivator activity. Interacts with PDS5A. Interacts (via activation domain) with NOC2L. Interacts with WWP1. It depends on Zn(2+) as a cofactor. In terms of processing, may be sumoylated. Post-translationally, ubiquitinated. Polyubiquitination involves WWP1 and leads to proteasomal degradation of this protein. As to expression, widely expressed, notably in thymus, prostate, placenta and skeletal muscle, although the precise isoform varies according to tissue type. Progenitor cell layers of skin, breast and prostate express high levels of DeltaN-type isoforms.

It is found in the nucleus. Acts as a sequence specific DNA binding transcriptional activator or repressor. The isoforms contain a varying set of transactivation and auto-regulating transactivation inhibiting domains thus showing an isoform specific activity. May be required in conjunction with TP73/p73 for initiation of p53/TP53 dependent apoptosis in response to genotoxic insults and the presence of activated oncogenes. Involved in Notch signaling by probably inducing JAG1 and JAG2. Activates transcription of the p21 promoter. Activates RIPK4 transcription. Plays a role in the regulation of epithelial morphogenesis. The ratio of DeltaN-type and TA*-type isoforms may govern the maintenance of epithelial stem cell compartments and regulate the initiation of epithelial stratification from the undifferentiated embryonal ectoderm. Required for limb formation from the apical ectodermal ridge. The chain is Tumor protein 63 (Tp63) from Mus musculus (Mouse).